We begin with the raw amino-acid sequence, 382 residues long: RNA binding protein fox-1 homolog 1-like (382 aa).

Disordered regions lie at residues 34-79 and 94-148; these read QEAG…AAHP and GPQH…QPKR. A compositionally biased stretch (pro residues) spans 49-65; it reads YAPPPSYPPPGQAPPTP. Over residues 101–110 the composition is skewed to polar residues; the sequence is ESITASNTDD. One can recognise an RRM domain in the interval 147–223; the sequence is KRLHVSNIPF…RKIEVNNATA (77 aa).

Expressed during muscle development in adaxial cells, somites, cardiac precursors, finbuds and jaw muscle cells.

It localises to the nucleus. Its function is as follows. RNA-binding protein that regulates alternative splicing events by binding to 5'-GCAUG-3' elements. Regulates alternative splicing of tissue-specific exons. The chain is RNA binding protein fox-1 homolog 1-like (rbfox1l) from Danio rerio (Zebrafish).